The following is a 308-amino-acid chain: tRNA dimethylallyltransferase (308 aa).

Residue 19-26 (GPTASGKS) coordinates ATP. Substrate is bound at residue 21–26 (TASGKS). The interaction with substrate tRNA stretch occupies residues 44 to 47 (DSMQ).

This sequence belongs to the IPP transferase family. As to quaternary structure, monomer. The cofactor is Mg(2+).

The enzyme catalyses adenosine(37) in tRNA + dimethylallyl diphosphate = N(6)-dimethylallyladenosine(37) in tRNA + diphosphate. Its function is as follows. Catalyzes the transfer of a dimethylallyl group onto the adenine at position 37 in tRNAs that read codons beginning with uridine, leading to the formation of N6-(dimethylallyl)adenosine (i(6)A). This chain is tRNA dimethylallyltransferase, found in Methylobacterium radiotolerans (strain ATCC 27329 / DSM 1819 / JCM 2831 / NBRC 15690 / NCIMB 10815 / 0-1).